The chain runs to 399 residues: Mycinamicin VI 2''-O-methyltransferase (399 aa).

S-adenosyl-L-methionine contacts are provided by residues threonine 173, 202–208 (EIGVGGY), serine 217, aspartate 234, 252–253 (DQ), and aspartate 275. A Mg(2+)-binding site is contributed by aspartate 275. Histidine 278 acts as the Proton acceptor in catalysis. Mg(2+) contacts are provided by glutamate 303 and aspartate 304.

It belongs to the methyltransferase OleY/MycE family. As to quaternary structure, homotetramer. It depends on Mg(2+) as a cofactor.

The enzyme catalyses mycinamicin VI + S-adenosyl-L-methionine = mycinamicin III + S-adenosyl-L-homocysteine + H(+). It participates in antibiotic biosynthesis; mycinamicin biosynthesis. Functionally, O-methyltransferase that catalyzes the conversion of mycinamicin VI to mycinamicin III in the biosynthesis of mycinamicin, a 16-membered macrolide antibiotic. The chain is Mycinamicin VI 2''-O-methyltransferase (mycE) from Micromonospora griseorubida.